Consider the following 527-residue polypeptide: Probable glucomannan 4-beta-mannosyltransferase 9 (527 aa).

The helical transmembrane segment at 37–59 threads the bilayer; sequence AMSVMLFVEKVYMSVVLVGVHLF. Aspartate 131 is an active-site residue. Residues aspartate 190 and aspartate 192 each coordinate substrate. Aspartate 284 is a catalytic residue. 4 helical membrane passes run 363–383, 399–419, 478–498, and 505–525; these read IIGHIVTFVFYCLVVPATVLI, IVTILNSIGTPRSLHLLIFWV, ALELGFSAYLSFCGCYDIAYG, and FLFLQSITFFIIGVGYVGTIV.

The protein belongs to the glycosyltransferase 2 family. Plant cellulose synthase-like A subfamily.

The protein resides in the golgi apparatus membrane. It carries out the reaction GDP-mannose + (glucomannan)n = GDP + (glucomannan)n+1.. Probable mannan synthase which consists of a 4-beta-mannosyltransferase activity on mannan using GDP-mannose. The beta-1,4-mannan product is the backbone for galactomannan synthesis by galactomannan galactosyltransferase. Galactomannan is a noncellulosic polysaccharides of plant cell wall. The polypeptide is Probable glucomannan 4-beta-mannosyltransferase 9 (Oryza sativa subsp. japonica (Rice)).